We begin with the raw amino-acid sequence, 175 residues long: NAD(P)H-quinone oxidoreductase subunit J (175 aa).

It belongs to the complex I 30 kDa subunit family. NDH-1 can be composed of about 15 different subunits; different subcomplexes with different compositions have been identified which probably have different functions.

The protein localises to the cellular thylakoid membrane. It carries out the reaction a plastoquinone + NADH + (n+1) H(+)(in) = a plastoquinol + NAD(+) + n H(+)(out). The catalysed reaction is a plastoquinone + NADPH + (n+1) H(+)(in) = a plastoquinol + NADP(+) + n H(+)(out). Its function is as follows. NDH-1 shuttles electrons from an unknown electron donor, via FMN and iron-sulfur (Fe-S) centers, to quinones in the respiratory and/or the photosynthetic chain. The immediate electron acceptor for the enzyme in this species is believed to be plastoquinone. Couples the redox reaction to proton translocation, and thus conserves the redox energy in a proton gradient. Cyanobacterial NDH-1 also plays a role in inorganic carbon-concentration. The chain is NAD(P)H-quinone oxidoreductase subunit J from Trichormus variabilis (strain ATCC 29413 / PCC 7937) (Anabaena variabilis).